We begin with the raw amino-acid sequence, 210 residues long: VSNSSSQIILKWKPPSDPNGNITHYLVFWERQAEDSELFELDYCLKGLKLPSRTWSPPFESEDSQKHNQSEYEDSAGECCSCPKTDSQILKELEESSFRKTFEDYLHNVVFVPRKTSSGTGAEDPRPSRKRRSLGDVGNVTVAVPTVAAFPNTSSTSTPTSPEEHRPFEKVVNKESLVISGLRHFTGYRIELQACNQDTPEERCSVAAYV.

Positions 1 to 96 (VSNSSSQIIL…SQILKELEES (96 aa)) constitute a Fibronectin type-III domain. N-linked (GlcNAc...) asparagine glycosylation is found at asparagine 3, asparagine 21, and asparagine 68. The disordered stretch occupies residues 55–78 (WSPPFESEDSQKHNQSEYEDSAGE). Positions 103–111 (EDYLHNVVF) are insulin-binding. The disordered stretch occupies residues 116–169 (TSSGTGAEDPRPSRKRRSLGDVGNVTVAVPTVAAFPNTSSTSTPTSPEEHRPFE). The Extracellular segment spans residues 133–210 (SLGDVGNVTV…EERCSVAAYV (78 aa)). Over residues 137–161 (VGNVTVAVPTVAAFPNTSSTSTPTS) the composition is skewed to low complexity. Residues asparagine 139 and asparagine 152 are each glycosylated (N-linked (GlcNAc...) asparagine). Cysteine 195 and cysteine 204 are disulfide-bonded.

The protein belongs to the protein kinase superfamily. Tyr protein kinase family. Insulin receptor subfamily. Tetramer of 2 alpha and 2 beta chains linked by disulfide bonds. The alpha chains carry the insulin-binding regions, while the beta chains carry the kinase domain. Forms a hybrid receptor with IGF1R, the hybrid is a tetramer consisting of 1 alpha chain and 1 beta chain of INSR and 1 alpha chain and 1 beta chain of IGF1R. Interacts with SORBS1 but dissociates from it following insulin stimulation. Binds SH2B2. Activated form of INSR interacts (via phosphorylated Tyrosine) with the PTB/PID domains of IRS1 and SHC1. The sequences surrounding the phosphorylated NPXY motif contribute differentially to either IRS1 or SHC1 recognition. Interacts (via tyrosines in the C-terminus) with IRS2 (via PTB domain and 591-786 AA); the 591-786 would be the primary anchor of IRS2 to INSR while the PTB domain would have a stabilizing action on the interaction with INSR. Interacts with the SH2 domains of the 85 kDa regulatory subunit of PI3K (PIK3R1) in vitro, when autophosphorylated on tyrosine residues. Interacts with SOCS7. Interacts with SOCS3. Interacts with SOCS1. Interacts with CAV2 (tyrosine-phosphorylated form); the interaction is increased with 'Tyr-27'phosphorylation of CAV2. Interacts with ARRB2. Interacts with GRB10; this interaction blocks the association between IRS1/IRS2 and INSR, significantly reduces insulin-stimulated tyrosine phosphorylation of IRS1 and IRS2 and thus decreases insulin signaling. Interacts with GRB7. Interacts with PDPK1. Interacts with GRB14 (via BPS domain). Interacts (via subunit alpha) with ENPP1 (via 485-599 AA); this interaction blocks autophosphorylation. Interacts with PTPRE. Interacts with STAT5B (via SH2 domain). Interacts with PTPRF. Interacts with ATIC; ATIC together with PRKAA2/AMPK2 and HACD3/PTPLAD1 is proposed to be part of a signaling netwok regulating INSR autophosphorylation and endocytosis. Interacts with the insulin receptor SORL1; this interaction strongly increases its surface exposure, hence strengthens insulin signal reception. Interacts (tyrosine phosphorylated) with CCDC88A/GIV (via SH2-like region); binding requires autophosphorylation of the INSR C-terminal region. Interacts with GNAI3; the interaction is probably mediated by CCDC88A/GIV. Interacts with LMBRD1. Interacts (in response to insulin stimulation) with NCK1; this interaction may recruit PTPN1 to mediate INSR dephosphorylation. In terms of processing, after being transported from the endoplasmic reticulum to the Golgi apparatus, the single glycosylated precursor is further glycosylated and then cleaved, followed by its transport to the plasma membrane. Post-translationally, autophosphorylated on tyrosine residues in response to insulin. Dephosphorylated by PTPN1, PTPRE and PTPRF. Dephosphorylated by PTPN2; down-regulates insulin-induced signaling. S-nitrosylation by BLVRB inhibits the receptor tyrosine kinase, thereby inhibiting insulin signaling.

It is found in the cell membrane. It localises to the late endosome. The protein localises to the lysosome. The catalysed reaction is L-tyrosyl-[protein] + ATP = O-phospho-L-tyrosyl-[protein] + ADP + H(+). With respect to regulation, activated in response to insulin. Autophosphorylation activates the kinase activity. PTPN1, PTPRE and PTPRF dephosphorylate important tyrosine residues, thereby reducing INSR activity. Inhibited by ENPP1. GRB10 and GRB14 inhibit the catalytic activity of the INSR, they block access of substrates to the activated receptor. SOCS1 and SOCS3 act as negative regulators of INSR activity, they bind to the activated INRS and interfere with the phosphorylation of INSR substrates. Its function is as follows. Receptor tyrosine kinase which mediates the pleiotropic actions of insulin. Binding of insulin leads to phosphorylation of several intracellular substrates, including, insulin receptor substrates (IRS1, 2, 3, 4), SHC, GAB1, CBL and other signaling intermediates. Each of these phosphorylated proteins serve as docking proteins for other signaling proteins that contain Src-homology-2 domains (SH2 domain) that specifically recognize different phosphotyrosine residues, including the p85 regulatory subunit of PI3K and SHP2. Phosphorylation of IRSs proteins lead to the activation of two main signaling pathways: the PI3K-AKT/PKB pathway, which is responsible for most of the metabolic actions of insulin, and the Ras-MAPK pathway, which regulates expression of some genes and cooperates with the PI3K pathway to control cell growth and differentiation. Binding of the SH2 domains of PI3K to phosphotyrosines on IRS1 leads to the activation of PI3K and the generation of phosphatidylinositol-(3, 4, 5)-triphosphate (PIP3), a lipid second messenger, which activates several PIP3-dependent serine/threonine kinases, such as PDPK1 and subsequently AKT/PKB. The net effect of this pathway is to produce a translocation of the glucose transporter SLC2A4/GLUT4 from cytoplasmic vesicles to the cell membrane to facilitate glucose transport. Moreover, upon insulin stimulation, activated AKT/PKB is responsible for: anti-apoptotic effect of insulin by inducing phosphorylation of BAD; regulates the expression of gluconeogenic and lipogenic enzymes by controlling the activity of the winged helix or forkhead (FOX) class of transcription factors. Another pathway regulated by PI3K-AKT/PKB activation is mTORC1 signaling pathway which regulates cell growth and metabolism and integrates signals from insulin. AKT mediates insulin-stimulated protein synthesis by phosphorylating TSC2 thereby activating mTORC1 pathway. The Ras/RAF/MAP2K/MAPK pathway is mainly involved in mediating cell growth, survival and cellular differentiation of insulin. Phosphorylated IRS1 recruits GRB2/SOS complex, which triggers the activation of the Ras/RAF/MAP2K/MAPK pathway. In addition to binding insulin, the insulin receptor can bind insulin-like growth factors (IGFI and IGFII). When present in a hybrid receptor with IGF1R, binds IGF1. In adipocytes, inhibits lipolysis. This Macaca mulatta (Rhesus macaque) protein is Insulin receptor (INSR).